A 327-amino-acid chain; its full sequence is Inactive peptidyl-prolyl cis-trans isomerase FKBP6 (327 aa).

The region spanning 54–143 (DASVLVKYSG…LFEIELLDFL (90 aa)) is the PPIase FKBP-type domain. TPR repeat units lie at residues 171-204 (AATEREFGNYLFRQNRFYDAKVRYKRALLLLRRR), 219-252 (LPVLLNLSFTYLKLDRPTIALCYGEQALIIDQKN), and 253-286 (AKALFRCGQACLLLTEYQKARDFLVRAQKEQPFN).

This sequence belongs to the FKBP6 family. Interacts (via TPR repeats) with HSP90. Interacts with HSP72/HSPA2 and CLTC. Interacts with GAPDH; leading to inhibit GAPDH catalytic activity. Detected in all tissues examined, with higher expression in testis, heart, skeletal muscle, liver, and kidney.

The protein localises to the cytoplasm. It is found in the nucleus. Functionally, has an essential role in spermatogenesis. It is required to repress transposable elements and prevent their mobilization, which is essential for the germline integrity. Acts via the piRNA metabolic process, which mediates the repression of transposable elements during meiosis by forming complexes composed of piRNAs and Piwi proteins and govern the methylation and subsequent repression of transposons. Acts as a co-chaperone via its interaction with HSP90 and is required for the piRNA amplification process, the secondary piRNA biogenesis. May be required together with HSP90 in removal of 16 nucleotide ping-pong by-products from Piwi complexes, possibly facilitating turnover of Piwi complexes. The sequence is that of Inactive peptidyl-prolyl cis-trans isomerase FKBP6 (FKBP6) from Homo sapiens (Human).